The sequence spans 187 residues: Translation initiation factor IF-3 (187 aa).

Belongs to the IF-3 family. In terms of assembly, monomer.

Its subcellular location is the cytoplasm. Its function is as follows. IF-3 binds to the 30S ribosomal subunit and shifts the equilibrium between 70S ribosomes and their 50S and 30S subunits in favor of the free subunits, thus enhancing the availability of 30S subunits on which protein synthesis initiation begins. The chain is Translation initiation factor IF-3 from Leptospira biflexa serovar Patoc (strain Patoc 1 / Ames).